We begin with the raw amino-acid sequence, 48 residues long: Delta-stichotoxin-Hcr1b (48 aa).

3 disulfides stabilise this stretch: cysteine 3-cysteine 43, cysteine 5-cysteine 33, and cysteine 26-cysteine 44.

The protein belongs to the sea anemone sodium channel inhibitory toxin family. Type II subfamily.

It is found in the secreted. The protein resides in the nematocyst. Its function is as follows. Binds to site 3 of voltage-gated sodium channels and inhibits the inactivation process. The protein is Delta-stichotoxin-Hcr1b of Radianthus crispa (Leathery sea anemone).